Reading from the N-terminus, the 141-residue chain is Galactose-6-phosphate isomerase subunit LacA (141 aa).

This sequence belongs to the LacAB/RpiB family. As to quaternary structure, heteromultimeric protein consisting of LacA and LacB.

The enzyme catalyses aldehydo-D-galactose 6-phosphate = keto-D-tagatose 6-phosphate. Its pathway is carbohydrate metabolism; D-galactose 6-phosphate degradation; D-tagatose 6-phosphate from D-galactose 6-phosphate: step 1/1. This is Galactose-6-phosphate isomerase subunit LacA from Streptococcus equi subsp. equi (strain 4047).